The sequence spans 544 residues: Phosphomannomutase (544 aa).

S145 acts as the Phosphoserine intermediate in catalysis. The Mg(2+) site is built by S145, D297, D299, and D301.

Belongs to the phosphohexose mutase family. Mg(2+) is required as a cofactor.

The catalysed reaction is alpha-D-mannose 1-phosphate = D-mannose 6-phosphate. The chain is Phosphomannomutase (manB) from Mycoplasmoides pirum (Mycoplasma pirum).